The chain runs to 187 residues: MKISGVDIRPGNIIEYEGGIWRAVKIQHTQPGKGGAYMQVEMKNLIDGRKNNVRFRSAETVERVRLDTKDFQFLFAEGEDLTFMDKDTYEQITLPRDLLGDAAAFLQDGMDVVMELYEERPISVQLPDQVEATIVEADAVVKGQTASSSYKPAMLDNGVRVMVPPHISSGTRIVVDVYEQTYVRRAD.

This sequence belongs to the elongation factor P family.

The protein localises to the cytoplasm. The protein operates within protein biosynthesis; polypeptide chain elongation. Its function is as follows. Involved in peptide bond synthesis. Stimulates efficient translation and peptide-bond synthesis on native or reconstituted 70S ribosomes in vitro. Probably functions indirectly by altering the affinity of the ribosome for aminoacyl-tRNA, thus increasing their reactivity as acceptors for peptidyl transferase. The protein is Elongation factor P of Rhizorhabdus wittichii (strain DSM 6014 / CCUG 31198 / JCM 15750 / NBRC 105917 / EY 4224 / RW1) (Sphingomonas wittichii).